The following is a 351-amino-acid chain: Photosystem II D2 protein (351 aa).

The helical transmembrane segment at 39-59 threads the bilayer; that stretch reads TAYLAVGGWMTGTTFVTSWYT. His116 serves as a coordination point for chlorophyll a. A helical membrane pass occupies residues 123–139; sequence GFCLRQFEIARLVGIRP. Pheophytin a is bound by residues Gln128 and Asn141. The chain crosses the membrane as a helical span at residues 151–164; the sequence is VFVSVFLLYPLGQA. Chlorophyll a is bound at residue His196. A helical membrane pass occupies residues 206–226; sequence GALLCAIHGATVENTLFEDGD. A plastoquinone contacts are provided by His213 and Phe260. His213 serves as a coordination point for Fe cation. Fe cation is bound at residue His267. A helical membrane pass occupies residues 277-293; that stretch reads GLWTSAIGIVGLALNLR.

This sequence belongs to the reaction center PufL/M/PsbA/D family. PSII is composed of 1 copy each of membrane proteins PsbA, PsbB, PsbC, PsbD, PsbE, PsbF, PsbH, PsbI, PsbJ, PsbK, PsbL, PsbM, PsbT, PsbX, PsbY, PsbZ, Psb30/Ycf12, at least 3 peripheral proteins of the oxygen-evolving complex and a large number of cofactors. It forms dimeric complexes. The D1/D2 heterodimer binds P680, chlorophylls that are the primary electron donor of PSII, and subsequent electron acceptors. It shares a non-heme iron and each subunit binds pheophytin, quinone, additional chlorophylls, carotenoids and lipids. There is also a Cl(-1) ion associated with D1 and D2, which is required for oxygen evolution. The PSII complex binds additional chlorophylls, carotenoids and specific lipids. serves as cofactor.

The protein resides in the plastid. It is found in the chloroplast thylakoid membrane. The enzyme catalyses 2 a plastoquinone + 4 hnu + 2 H2O = 2 a plastoquinol + O2. In terms of biological role, photosystem II (PSII) is a light-driven water:plastoquinone oxidoreductase that uses light energy to abstract electrons from H(2)O, generating O(2) and a proton gradient subsequently used for ATP formation. It consists of a core antenna complex that captures photons, and an electron transfer chain that converts photonic excitation into a charge separation. The D1/D2 (PsbA/PsbD) reaction center heterodimer binds P680, the primary electron donor of PSII as well as several subsequent electron acceptors. D2 is needed for assembly of a stable PSII complex. This chain is Photosystem II D2 protein, found in Phaeodactylum tricornutum (strain CCAP 1055/1).